Here is a 186-residue protein sequence, read N- to C-terminus: Intraflagellar transport protein 27 homolog (186 aa).

GTP contacts are provided by residues 12-19 (GDPTVGKT), 64-68 (DSAGK), and 123-126 (NKTD).

It belongs to the small GTPase superfamily. Rab family. Component of the IFT complex B, at least composed of IFT20, IFT22, IFT25, IFT27, IFT46, IFT52, TRAF3IP1/IFT54, IFT57, IFT74, IFT80, IFT81, and IFT88. Interacts with IFT25. Interacts with IFT70B. Interacts with RABL2/RABL2A; binding is equal in the presence of GTP or GDP. Interacts with IFT88. Interacts with ARL6; recognizes and binds with the GTP-free form of ARL6.

The protein localises to the cell projection. It localises to the cilium. Its subcellular location is the cytoplasm. It is found in the flagellum. In terms of biological role, small GTPase-like component of the intraflagellar transport (IFT) complex B that promotes the exit of the BBSome complex from cilia via its interaction with ARL6. Not involved in entry of the BBSome complex into cilium. Prevents aggregation of GTP-free ARL6. Required for hedgehog signaling. Forms a subcomplex within the IFT complex B with IFT25. Its role in intraflagellar transport is mainly seen in tissues rich in ciliated cells such as kidney and testis. Essential for male fertility, spermiogenesis and sperm flagella formation. Plays a role in the early development of the kidney. May be involved in the regulation of ureteric bud initiation. The polypeptide is Intraflagellar transport protein 27 homolog (IFT27) (Bos taurus (Bovine)).